The following is a 90-amino-acid chain: Probable small nuclear ribonucleoprotein E (90 aa).

The 76-residue stretch at valine 14–glutamate 89 folds into the Sm domain.

This sequence belongs to the snRNP Sm proteins family. In terms of assembly, core component of the spliceosomal U1, U2, U4 and U5 small nuclear ribonucleoproteins (snRNPs), the building blocks of the spliceosome.

The protein resides in the nucleus. The protein localises to the cytoplasm. It localises to the cytosol. In terms of biological role, plays a role in pre-mRNA splicing as a core component of the spliceosomal U1, U2, U4 and U5 small nuclear ribonucleoproteins (snRNPs), the building blocks of the spliceosome. The sequence is that of Probable small nuclear ribonucleoprotein E (snr-6) from Caenorhabditis briggsae.